A 702-amino-acid chain; its full sequence is NAD(P)H-quinone oxidoreductase subunit 5, chloroplastic (702 aa).

The next 16 membrane-spanning stretches (helical) occupy residues 7 to 27, 40 to 60, 91 to 111, 124 to 144, 147 to 167, 189 to 209, 224 to 244, 258 to 278, 289 to 309, 327 to 347, 354 to 374, 395 to 415, 427 to 447, 511 to 531, 562 to 582, and 680 to 700; these read YVWI…LGLI, SAIL…TVLW, PLSA…MIYT, FFAY…SPNL, VYAF…FWFT, LLLG…DIVA, VLLT…SAQF, TPIS…YLVA, LVMD…ATVA, LGYM…FHLI, ALLF…VGYN, GVTF…ACFW, KLPV…FYMF, IPLI…APLP, FAIT…IAWI, and IFVL…FNFF.

It belongs to the complex I subunit 5 family. NDH is composed of at least 16 different subunits, 5 of which are encoded in the nucleus.

The protein resides in the plastid. Its subcellular location is the chloroplast thylakoid membrane. It catalyses the reaction a plastoquinone + NADH + (n+1) H(+)(in) = a plastoquinol + NAD(+) + n H(+)(out). The catalysed reaction is a plastoquinone + NADPH + (n+1) H(+)(in) = a plastoquinol + NADP(+) + n H(+)(out). Its function is as follows. NDH shuttles electrons from NAD(P)H:plastoquinone, via FMN and iron-sulfur (Fe-S) centers, to quinones in the photosynthetic chain and possibly in a chloroplast respiratory chain. The immediate electron acceptor for the enzyme in this species is believed to be plastoquinone. Couples the redox reaction to proton translocation, and thus conserves the redox energy in a proton gradient. The sequence is that of NAD(P)H-quinone oxidoreductase subunit 5, chloroplastic (ndhF) from Zygnema circumcarinatum (Green alga).